Here is a 131-residue protein sequence, read N- to C-terminus: Profilin-3 (131 aa).

A disulfide bridge connects residues cysteine 13 and cysteine 115. The Involved in PIP2 interaction motif lies at 81 to 97 (AVIRGKKGAGGITIKKT). Threonine 111 carries the post-translational modification Phosphothreonine.

It belongs to the profilin family. As to quaternary structure, occurs in many kinds of cells as a complex with monomeric actin in a 1:1 ratio. Post-translationally, phosphorylated by MAP kinases.

It localises to the cytoplasm. The protein resides in the cytoskeleton. Its function is as follows. Binds to actin and affects the structure of the cytoskeleton. At high concentrations, profilin prevents the polymerization of actin, whereas it enhances it at low concentrations. This Olea europaea (Common olive) protein is Profilin-3.